A 162-amino-acid polypeptide reads, in one-letter code: Caveolin-2 (162 aa).

At 1-86 (MGLETEKADV…FEISKYVMYK (86 aa)) the chain is on the cytoplasmic side. The residue at position 19 (Y19) is a Phosphotyrosine; by SRC. Phosphoserine occurs at positions 20 and 23. Y27 is subject to Phosphotyrosine; by SRC. S36 is subject to Phosphoserine. An intramembrane region (helical) is located at residues 87 to 107 (FLTVFLSIPLAFLAGILFATL). Topologically, residues 108–162 (SCLHIWIIMPFVKTCLMVLPSVQTIWKSVTDAIIAPLCTSIGRSFSSVSLQLSHD) are cytoplasmic.

This sequence belongs to the caveolin family. As to quaternary structure, monomer or homodimer. Interacts with CAV1; the interaction forms a stable heterooligomeric complex that is required for targeting to lipid rafts and for caveolae formation. Tyrosine phosphorylated forms do not form heterooligomers with the Tyr-19-phosphorylated form existing as a monomer or dimer, and the Tyr-27-form as a monomer only. Interacts (tyrosine phosphorylated form) with the SH2 domain-containing proteins, RASA1, NCK1 and SRC. Interacts (tyrosine phosphorylated form) with INSR, the interaction (Tyr-27-phosphorylated form) is increased on insulin stimulation. Interacts (Tyr-19 phosphorylated form) with MAPK1 (phosphorylated form); the interaction, promoted by insulin, leads to nuclear location and MAPK1 activation. Interacts with STAT3; the interaction is increased on insulin-induced tyrosine phosphorylation leading to STAT activation. Phosphorylated on serine and tyrosine residues. CAV1 promotes phosphorylation on Ser-23 which then targets the complex to the plasma membrane, lipid rafts and caveolae. Phosphorylation on Ser-36 appears to modulate mitosis in endothelial cells. Phosphorylation on both Tyr-19 and Tyr-27 is required for insulin-induced 'Ser-727' phosphorylation of STAT3 and its activation. Phosphorylation on Tyr-19 is required for insulin-induced phosphorylation of MAPK1 and DNA binding of STAT3. Tyrosine phosphorylation is induced by both EGF and insulin (By. similarity).

Its subcellular location is the nucleus. The protein localises to the cytoplasm. It localises to the golgi apparatus membrane. The protein resides in the cell membrane. It is found in the membrane. Its subcellular location is the caveola. In terms of biological role, may act as a scaffolding protein within caveolar membranes. Interacts directly with G-protein alpha subunits and can functionally regulate their activity. Acts as an accessory protein in conjunction with CAV1 in targeting to lipid rafts and driving caveolae formation. The Ser-36 phosphorylated form has a role in modulating mitosis in endothelial cells. Positive regulator of cellular mitogenesis of the MAPK signaling pathway. Required for the insulin-stimulated nuclear translocation and activation of MAPK1 and STAT3, and the subsequent regulation of cell cycle progression. This chain is Caveolin-2 (CAV2), found in Saimiri boliviensis boliviensis (Bolivian squirrel monkey).